We begin with the raw amino-acid sequence, 447 residues long: Argininosuccinate synthase (447 aa).

Residues 17–25 (AFSGGLDTS) and Ala-43 each bind ATP. Tyr-99 serves as a coordination point for L-citrulline. The ATP site is built by Gly-129 and Thr-131. L-aspartate is bound by residues Thr-131, Asn-135, and Asp-136. Asn-135 lines the L-citrulline pocket. Asp-136 contributes to the ATP binding site. 2 residues coordinate L-citrulline: Arg-139 and Ser-192. Asp-194 contacts ATP. Thr-201, Glu-203, and Glu-280 together coordinate L-citrulline.

This sequence belongs to the argininosuccinate synthase family. Type 2 subfamily. As to quaternary structure, homotetramer.

It localises to the cytoplasm. The enzyme catalyses L-citrulline + L-aspartate + ATP = 2-(N(omega)-L-arginino)succinate + AMP + diphosphate + H(+). It participates in amino-acid biosynthesis; L-arginine biosynthesis; L-arginine from L-ornithine and carbamoyl phosphate: step 2/3. The polypeptide is Argininosuccinate synthase (Escherichia coli O127:H6 (strain E2348/69 / EPEC)).